The following is a 418-amino-acid chain: Sonic hedgehog protein (418 aa).

An N-terminal signal peptide occupies residues M1–A23. C24 carries the N-palmitoyl cysteine lipid modification. Residues R32–K38 carry the Cardin-Weintraub motif. Residues E89, E90, D95, T125, E126, D129, and D131 each contribute to the Ca(2+) site. Zn(2+) is bound by residues H140, D147, and H182. The Cholesterol glycine ester moiety is linked to residue G197.

This sequence belongs to the hedgehog family. In terms of assembly, interacts with HHATL/GUP1 which negatively regulates HHAT-mediated palmitoylation of the SHH N-terminus. Interacts with BOC and CDON. Interacts with HHIP. Interacts with DISP1 via its cholesterol anchor. Interacts with SCUBE2. As to quaternary structure, multimer. The C-terminal domain displays an autoproteolysis activity and a cholesterol transferase activity. Both activities result in the cleavage of the full-length protein and covalent attachment of a cholesterol moiety to the C-terminal of the newly generated N-terminal fragment (ShhN). Cholesterylation is required for the sonic hedgehog protein N-product targeting to lipid rafts and multimerization. ShhN is the active species in both local and long-range signaling, whereas the C-product (ShhC) is degraded in the reticulum endoplasmic. Post-translationally, N-palmitoylation by HHAT of ShhN is required for sonic hedgehog protein N-product multimerization and full activity. It is a prerequisite for the membrane-proximal positioning and the subsequent shedding of this N-terminal peptide. In terms of processing, the lipidated N- and C-terminal peptides of ShhNp can be cleaved (shedding). The N-terminal palmitoylated peptide is cleaved at the Cardin-Weintraub (CW) motif site. The cleavage reduced the interactions with heparan sulfate. The cleavage is enhanced by SCUBE2. In terms of tissue distribution, expressed in the ventral midline of the neural tube and brain. Also found in the notochord and in developing fin bud. In the developing brain, expression occurs in domains that include a discrete region in the floor of the diencephalon.

The protein localises to the endoplasmic reticulum membrane. It localises to the golgi apparatus membrane. Its subcellular location is the cell membrane. It carries out the reaction glycyl-L-cysteinyl-[protein] + cholesterol + H(+) = [protein]-C-terminal glycyl cholesterol ester + N-terminal L-cysteinyl-[protein]. Functionally, the C-terminal part of the sonic hedgehog protein precursor displays an autoproteolysis and a cholesterol transferase activity. Both activities result in the cleavage of the full-length protein into two parts (ShhN and ShhC) followed by the covalent attachment of a cholesterol moiety to the C-terminal of the newly generated ShhN. Both activities occur in the endoplasmic reticulum. Once cleaved, ShhC is degraded in the endoplasmic reticulum. Its function is as follows. The dually lipidated sonic hedgehog protein N-product (ShhNp) is a morphogen which is essential for a variety of patterning events during development. Involved in dorso-ventral patterning of the brain and in early patterning of the developing eyes. Binds to the patched (PTCH1) receptor, which functions in association with smoothened (SMO), to activate the transcription of target genes. In the absence of SHH, PTCH1 represses the constitutive signaling activity of SMO. The sequence is that of Sonic hedgehog protein (shha) from Danio rerio (Zebrafish).